Here is a 161-residue protein sequence, read N- to C-terminus: Ribonuclease P protein component (161 aa).

The protein belongs to the RnpA family. Consists of a catalytic RNA component (M1 or rnpB) and a protein subunit.

The catalysed reaction is Endonucleolytic cleavage of RNA, removing 5'-extranucleotides from tRNA precursor.. In terms of biological role, RNaseP catalyzes the removal of the 5'-leader sequence from pre-tRNA to produce the mature 5'-terminus. It can also cleave other RNA substrates such as 4.5S RNA. The protein component plays an auxiliary but essential role in vivo by binding to the 5'-leader sequence and broadening the substrate specificity of the ribozyme. This chain is Ribonuclease P protein component, found in Helicobacter pylori (strain J99 / ATCC 700824) (Campylobacter pylori J99).